Here is a 346-residue protein sequence, read N- to C-terminus: Methylthioribose-1-phosphate isomerase (346 aa).

Residues R48 to A50, R91, and Q200 contribute to the substrate site. The Proton donor role is filled by D241. N251 to K252 serves as a coordination point for substrate.

Belongs to the eIF-2B alpha/beta/delta subunits family. MtnA subfamily.

It carries out the reaction 5-(methylsulfanyl)-alpha-D-ribose 1-phosphate = 5-(methylsulfanyl)-D-ribulose 1-phosphate. The protein operates within amino-acid biosynthesis; L-methionine biosynthesis via salvage pathway; L-methionine from S-methyl-5-thio-alpha-D-ribose 1-phosphate: step 1/6. Catalyzes the interconversion of methylthioribose-1-phosphate (MTR-1-P) into methylthioribulose-1-phosphate (MTRu-1-P). The protein is Methylthioribose-1-phosphate isomerase of Picosynechococcus sp. (strain ATCC 27264 / PCC 7002 / PR-6) (Agmenellum quadruplicatum).